Here is a 298-residue protein sequence, read N- to C-terminus: MDQKQIEEIVRSVMASMGQDVPQPVAPSTQEGAKPQCAAPTVTESCALDLGSAEAKAWIGVENPHRADVLTELRRSTAARVCTGRAGPRPRTQALLRFLADHSRSKDTVLKEVPEEWVKAQGLLEVRSEISDKNLYLTRPDMGRRLSPEAIDALKSQCVMNPDVQVVVSDGLSTDAITANYEEILPPLLAGLKQAGLNVGTPFFVRYGRVKIEDQIGEILGAKVVILLVGERPGLGQSESLSCYAVYSPRVATTVEADRTCISNIHQGGTPPVEAAAVIVDLAKRMLEQKASGINMTR.

Adenosylcob(III)alamin is bound by residues Val-210, Glu-231, and Cys-261.

It belongs to the EutC family. In terms of assembly, the basic unit is a heterodimer which dimerizes to form tetramers. The heterotetramers trimerize; 6 large subunits form a core ring with 6 small subunits projecting outwards. Requires adenosylcob(III)alamin as cofactor.

The protein localises to the bacterial microcompartment. The enzyme catalyses ethanolamine = acetaldehyde + NH4(+). Its pathway is amine and polyamine degradation; ethanolamine degradation. Its function is as follows. Catalyzes the deamination of various vicinal amino-alcohols to oxo compounds. Allows this organism to utilize ethanolamine as the sole source of nitrogen and carbon in the presence of external vitamin B12. The sequence is that of Ethanolamine ammonia-lyase small subunit from Salmonella dublin (strain CT_02021853).